Consider the following 307-residue polypeptide: Putative serpin A13 (307 aa).

Residues 1 to 21 (MEASRWWLLVTVLMAGAHCVA) form the signal peptide. 2 N-linked (GlcNAc...) asparagine glycosylation sites follow: asparagine 150 and asparagine 250.

Belongs to the serpin family.

The protein localises to the secreted. The chain is Putative serpin A13 (SERPINA13P) from Homo sapiens (Human).